A 951-amino-acid polypeptide reads, in one-letter code: Cation channel sperm-associated auxiliary subunit epsilon (951 aa).

An N-terminal signal peptide occupies residues 1 to 19 (MSAREVAVLLLWLSCYGSA). The Extracellular portion of the chain corresponds to 20-903 (LWRYSTNSPN…ETFGLIPSPS (884 aa)). 4 disulfides stabilise this stretch: cysteine 57–cysteine 71, cysteine 101–cysteine 206, cysteine 246–cysteine 336, and cysteine 410–cysteine 413. 2 N-linked (GlcNAc...) asparagine glycosylation sites follow: asparagine 61 and asparagine 114. 5 N-linked (GlcNAc...) asparagine glycosylation sites follow: asparagine 414, asparagine 472, asparagine 487, asparagine 493, and asparagine 535. Disulfide bonds link cysteine 583-cysteine 690, cysteine 703-cysteine 885, cysteine 719-cysteine 752, and cysteine 804-cysteine 835. N-linked (GlcNAc...) asparagine glycosylation is present at asparagine 796. Asparagine 854, asparagine 881, and asparagine 886 each carry an N-linked (GlcNAc...) asparagine glycan. Residues 904 to 924 (VYLVASFLFVLMLLFFTILVL) form a helical membrane-spanning segment. Topologically, residues 925-951 (SYFRYMRIYRRYIYEPLHKPQRKRKKN) are cytoplasmic.

Belongs to the CATSPERD family. As to quaternary structure, component of the CatSper complex or CatSpermasome composed of the core pore-forming members CATSPER1, CATSPER2, CATSPER3 and CATSPER4 as well as auxiliary members CATSPERB, CATSPERG, CATSPERD, CATSPERE, CATSPERZ, C2CD6/CATSPERT, TMEM249, TMEM262 and EFCAB9. HSPA1 may be an additional auxiliary complex member. The core complex members CATSPER1, CATSPER2, CATSPER3 and CATSPER4 form a heterotetrameric channel. The auxiliary CATSPERB, CATSPERG, CATSPERD and CATSPERE subunits form a pavilion-like structure over the pore which stabilizes the complex through interactions with CATSPER4, CATSPER3, CATSPER1 and CATSPER2 respectively. TMEM262/CATSPERH interacts with CATSPERB, further stabilizing the complex. C2CD6/CATSPERT interacts at least with CATSPERD and is required for targeting the CatSper complex in the flagellar membrane.

It localises to the cell projection. The protein localises to the cilium. It is found in the flagellum membrane. In terms of biological role, auxiliary component of the CatSper complex, a complex involved in sperm cell hyperactivation. Sperm cell hyperactivation is needed for sperm motility which is essential late in the preparation of sperm for fertilization. This chain is Cation channel sperm-associated auxiliary subunit epsilon, found in Homo sapiens (Human).